The following is a 493-amino-acid chain: Trichothecene 8-O-acetyltransferase (493 aa).

Over residues 180–191 (QDQNENEVQQPK) the composition is skewed to polar residues. The tract at residues 180–199 (QDQNENEVQQPKNLPDPDEP) is disordered.

It participates in sesquiterpene biosynthesis; trichothecene biosynthesis. Its function is as follows. Trichothecene 8-O-acetyltransferase; part of 2-gene cluster involved in trichothecene C-8 modification that mediates the biosynthesis of T2-toxin. The biosynthesis of trichothecenes begins with the cyclization of farnesyl diphosphate to trichodiene and is catalyzed by the trichodiene synthase TRI5. Trichodiene undergoes a series of oxygenations catalyzed by the cytochrome P450 monooxygenase TRI4. TRI4 controls the addition of four oxygens at C-2, C-3, C-11, and the C-12, C-13-epoxide to form the intermediate isotrichotriol. Isotrichotriol then undergoes a non-enzymatic isomerization and cyclization to form isotrichodermol. During this process, the oxygen at the C-2 position becomes the pyran ring oxygen and the hydroxyl group at C-11 is lost. More complex type A trichothecenes are built by modifying isotrichodermol through a series of paired hydroxylation and acetylation or acylation steps. Isotrichodermol is converted to isotrichodermin by the acetyltransferase TRI101. TRI101 encodes a C-3 transacetylase that acts as a self-protection or resistance factor during biosynthesis and that the presence of a free C-3 hydroxyl group is a key component of Fusarium trichothecene phytotoxicity. A second hydroxyl group is added to C-15 by the trichothecene C-15 hydroxylase TRI11, producing 15-decalonectrin, which is then acetylated by TRI3, producing calonectrin. A third hydroxyl group is added at C-4 by the cytochrome P450 monooxygenase TRI13, converting calonectrin to 3,15-diacetoxyspirpenol, which is subsequently acetylated bythe acetyltransferase TRI7. A fourth hydroxyl group is added to C-8 by the cytochrome P450 monooxygenase TRI1, followed by the addition of an isovaleryl moiety by TRI16. Finally, the acetyl group is removed from the C-3 position by the trichothecene C-3 esterase TRI8 to produce T-2 toxin. This is Trichothecene 8-O-acetyltransferase from Fusarium sporotrichioides.